A 209-amino-acid polypeptide reads, in one-letter code: Protein-L-isoaspartate O-methyltransferase (209 aa).

Serine 60 is an active-site residue.

It belongs to the methyltransferase superfamily. L-isoaspartyl/D-aspartyl protein methyltransferase family.

It localises to the cytoplasm. It catalyses the reaction [protein]-L-isoaspartate + S-adenosyl-L-methionine = [protein]-L-isoaspartate alpha-methyl ester + S-adenosyl-L-homocysteine. Catalyzes the methyl esterification of L-isoaspartyl residues in peptides and proteins that result from spontaneous decomposition of normal L-aspartyl and L-asparaginyl residues. It plays a role in the repair and/or degradation of damaged proteins. The sequence is that of Protein-L-isoaspartate O-methyltransferase from Methanococcus vannielii (strain ATCC 35089 / DSM 1224 / JCM 13029 / OCM 148 / SB).